The chain runs to 177 residues: Large ribosomal subunit protein uL6 (177 aa).

Belongs to the universal ribosomal protein uL6 family. As to quaternary structure, part of the 50S ribosomal subunit.

Its function is as follows. This protein binds to the 23S rRNA, and is important in its secondary structure. It is located near the subunit interface in the base of the L7/L12 stalk, and near the tRNA binding site of the peptidyltransferase center. The chain is Large ribosomal subunit protein uL6 from Afipia carboxidovorans (strain ATCC 49405 / DSM 1227 / KCTC 32145 / OM5) (Oligotropha carboxidovorans).